Reading from the N-terminus, the 429-residue chain is Saccharopine dehydrogenase-like oxidoreductase (429 aa).

Residue Ala2 is modified to N-acetylalanine. Phosphoserine is present on Ser217.

Belongs to the saccharopine dehydrogenase family.

The polypeptide is Saccharopine dehydrogenase-like oxidoreductase (SCCPDH) (Bos taurus (Bovine)).